The sequence spans 121 residues: uncharacterized protein (121 aa).

In terms of domain architecture, RRM spans 10–87; that stretch reads YIIIVTGVHP…EKLEVDFAFL (78 aa). The tract at residues 90–121 is disordered; that stretch reads PERAPRPSISTRSRSQSPEVQHRDRDVAMAEP. Residues 97–108 are compositionally biased toward polar residues; it reads SISTRSRSQSPE. Basic and acidic residues predominate over residues 109–121; sequence VQHRDRDVAMAEP.

Its subcellular location is the cytoplasm. The protein resides in the nucleus. This is an uncharacterized protein from Schizosaccharomyces pombe (strain 972 / ATCC 24843) (Fission yeast).